The following is a 316-amino-acid chain: Bifunctional protein FolD (316 aa).

Residues 165–167 (GKS) and Ile-231 contribute to the NADP(+) site.

The protein belongs to the tetrahydrofolate dehydrogenase/cyclohydrolase family. Homodimer.

The catalysed reaction is (6R)-5,10-methylene-5,6,7,8-tetrahydrofolate + NADP(+) = (6R)-5,10-methenyltetrahydrofolate + NADPH. The enzyme catalyses (6R)-5,10-methenyltetrahydrofolate + H2O = (6R)-10-formyltetrahydrofolate + H(+). The protein operates within one-carbon metabolism; tetrahydrofolate interconversion. Its function is as follows. Catalyzes the oxidation of 5,10-methylenetetrahydrofolate to 5,10-methenyltetrahydrofolate and then the hydrolysis of 5,10-methenyltetrahydrofolate to 10-formyltetrahydrofolate. The protein is Bifunctional protein FolD of Sphingobium chlorophenolicum.